We begin with the raw amino-acid sequence, 449 residues long: Glucose-6-phosphate isomerase (449 aa).

The active-site Proton donor is the Glu-290. Catalysis depends on residues His-311 and Lys-425.

Belongs to the GPI family.

It localises to the cytoplasm. It catalyses the reaction alpha-D-glucose 6-phosphate = beta-D-fructose 6-phosphate. It participates in carbohydrate biosynthesis; gluconeogenesis. Its pathway is carbohydrate degradation; glycolysis; D-glyceraldehyde 3-phosphate and glycerone phosphate from D-glucose: step 2/4. In terms of biological role, catalyzes the reversible isomerization of glucose-6-phosphate to fructose-6-phosphate. The protein is Glucose-6-phosphate isomerase of Exiguobacterium sibiricum (strain DSM 17290 / CCUG 55495 / CIP 109462 / JCM 13490 / 255-15).